The sequence spans 582 residues: Semenogelin-2 (582 aa).

The signal sequence occupies residues 1-23; it reads MKSIILFVLSLLLILEKQAAVMG. The tract at residues 24 to 59 is disordered; sequence QKGGSKGQLPSGSSQFPHGQKGQHYFGQKDQQHTKS. Residues 31–40 show a composition bias toward polar residues; it reads QLPSGSSQFP. 3 consecutive repeat copies span residues 70-129, 141-200, and 201-260. The tract at residues 70 to 559 is repeat-rich region; the sequence is HVDINDHDWT…SSESHNIVIT (490 aa). Disordered stretches follow at residues 132 to 160, 173 to 194, 228 to 248, and 269 to 582; these read GGQA…SQCS, KEQA…QSSY, EEHS…RLQH, and QTKN…PIST. Polar residues-rich tracts occupy residues 137–160 and 174–194; these read HGTQ…SQCS and EQAS…QSSY. Positions 261–500 are 4 X 60 AA tandem repeats, type I; the sequence is LVYNKNQHQT…QSSISFQIEK (240 aa). Asn-272 is a glycosylation site (N-linked (GlcNAc...) asparagine). A compositionally biased stretch (basic and acidic residues) spans 292–310; the sequence is RTEERQLHHGEKSVQKDVS. A compositionally biased stretch (polar residues) spans 325 to 334; that stretch reads KSQNQVTIHS. Residues 335–345 are compositionally biased toward basic and acidic residues; it reads QDQEHGHKENK. Polar residues predominate over residues 372 to 397; it reads GSISIQTEEQIHGKSQNQVRIPSQAQ. The span at 413-426 shows a compositional bias: basic and acidic residues; sequence TEERRLNSGEKDVQ. The span at 445–455 shows a compositional bias: polar residues; sequence KSQNQVTIPSQ. Positions 456–465 are enriched in basic and acidic residues; that stretch reads DQEHGHKENK. Polar residues-rich tracts occupy residues 482–496 and 506–532; these read GKST…SISF and SQIQ…QSAD. A 3-2 repeat occupies 501-559; sequence LVEGKSQIQTPNPNQDQWSGQNAKGKSGQSADSKQDLLSHEQKGRYKQESSESHNIVIT. Basic and acidic residues-rich tracts occupy residues 533–552 and 559–582; these read SKQD…ESSE and TEHE…PIST.

This sequence belongs to the semenogelin family. Interacts with SERPINA5. In terms of processing, semenogelin-2 is thought to form both the 71 kDa polypeptide and, in its glycosylated form, the 76 kDa polypeptide. As to expression, seminal vesicles, and to a much lesser extent, epididymis.

Its subcellular location is the secreted. Participates in the formation of a gel matrix (sperm coagulum) entrapping the accessory gland secretions and ejaculated spermatozoa. This is Semenogelin-2 (SEMG2) from Homo sapiens (Human).